The following is a 262-amino-acid chain: Small ribosomal subunit protein eS4x (262 aa).

An S4 RNA-binding domain is found at 42 to 104 (LPLVLIIRNR…TNENFRLLYD (63 aa)).

Belongs to the eukaryotic ribosomal protein eS4 family.

The protein resides in the cytoplasm. In Arabidopsis thaliana (Mouse-ear cress), this protein is Small ribosomal subunit protein eS4x (RPS4D).